The chain runs to 558 residues: Serine palmitoyltransferase 2 (558 aa).

Residues H33 to V42 are compositionally biased toward acidic residues. Residues H33–I57 form a disordered region. The residue at position 384 (K384) is an N6-(pyridoxal phosphate)lysine.

This sequence belongs to the class-II pyridoxal-phosphate-dependent aminotransferase family. Heterodimer of sptl-1/sptl-2. Pyridoxal 5'-phosphate is required as a cofactor.

The enzyme catalyses L-serine + hexadecanoyl-CoA + H(+) = 3-oxosphinganine + CO2 + CoA. It participates in lipid metabolism; sphingolipid metabolism. Its function is as follows. Component of the serine palmitoyltransferase (SPT) that catalyzes the first committed step in sphingolipid biosynthesis, which is the condensation of an acyl-CoA species and L-serine. The catalytic core is composed of a heterodimer of sptl-1 and sptl-2 or sptl-1 and sptl-3. Required for the specification of abicobasal polarity and development of the gut lumen. This chain is Serine palmitoyltransferase 2 (sptl-2), found in Caenorhabditis elegans.